The following is a 1082-amino-acid chain: MVNGCRVRSNLLDIQRNSFRSFLKKGLVEELRKIKDIAHEGFRISFQTDNVKYKKPKISAEFALKNGETYSLSVHIPVEVTYNNMFLVRNKYILFAKIPLMTEKGTFIFNGNKRIMVNQIIRSPGVYFEKNRYNDSIFATLIPTFGSWLTFKIDQDEGIFVKVDKIKTAIPLINFLKCLGLSRKKFFLYLNDPIFIETLQESESYGIRLEFFEFYKIFFPNEVNVRFGNARKFLRSKFMDPRKYDLGEVGRFRVNTKIYRSEFFQSNRTLQPEDVLGIAHYLIELKKGMIPFDEIDDLKNKLVRSIGELLQSQFRIILNELESSLKEKLIFLYKNPSEKTFRLSRFFNSYFITNRIRKFFSVNPLSQLLDDTNSLSELTHKRKLSPFGPNGLNKERTKLDVREINTSQYGRVCPIETSEGKNAGLILSLAKDVRVDKYGFLESPFYKVLRGKIETNKGIYFISSAQEKYFTVAPFDVFRSSQSNLLDKNKLLGVKRSKIFSYSFSKNIDFISISTDQFTSLGTGLVPFLEHNDANRVLMGSNMQRQSLILLEKEVPFIKTGREALINRESDATVLAKSSGKVIYSSLKKIVIQEEEYCANIEFFNKNYSFFNLLGCLNEISQKNFKLIKKVNQKIYFLESPKKSNHGVYIQKIPIVHEGEWVRKGQIIADGMSTLRGGICLGKNVLVAYLGWEGYNFEDAVIISERLVFEDIFTSIHMKKFKTFIVNDEKKGENISMFIPNASLKTIKNLKNNGIIKIGSEIKAQDVLIGRIKVKLKNTPKNKMLIAFFGNKVRKDVSLRSPRSLVGIVTSVEILCKKSNCSVLIHVAEKRRIQIGDKIAGRHGNKGIISKIVPSIDMPFLPDGTPVDMILNPLGIPSRMNVGQVFESLLNLSSLFLKERYKIQPFDEVQTSMNSKSFVYKKLNEARKRTKKDWLFNPNYPGKAFLYDGRNCRPFDHPVAFGYAYILKLIHMVKDKIHARVTGPYSSVTQQPLRGKSKNGGQRFGEMEVWAIEGFGAAYLLQELLTIKSDDVLNRSEALFSLINGTYFSKPNIPEAFKLFILEMQSLCIDIKIFTNNYKKFD.

It belongs to the RNA polymerase beta chain family. In plastids the minimal PEP RNA polymerase catalytic core is composed of four subunits: alpha, beta, beta', and beta''. When a (nuclear-encoded) sigma factor is associated with the core the holoenzyme is formed, which can initiate transcription.

It is found in the plastid. The protein localises to the chloroplast. The catalysed reaction is RNA(n) + a ribonucleoside 5'-triphosphate = RNA(n+1) + diphosphate. Functionally, DNA-dependent RNA polymerase catalyzes the transcription of DNA into RNA using the four ribonucleoside triphosphates as substrates. The polypeptide is DNA-directed RNA polymerase subunit beta (Euglena gracilis).